Consider the following 475-residue polypeptide: Ribulose bisphosphate carboxylase large chain (475 aa).

A propeptide spanning residues M1–S2 is cleaved from the precursor. At P3 the chain carries N-acetylproline. N6,N6,N6-trimethyllysine is present on K14. Substrate contacts are provided by N123 and T173. K175 functions as the Proton acceptor in the catalytic mechanism. K177 provides a ligand contact to substrate. 3 residues coordinate Mg(2+): K201, D203, and E204. K201 is subject to N6-carboxylysine. H294 functions as the Proton acceptor in the catalytic mechanism. Residues R295, H327, and S379 each contribute to the substrate site.

The protein belongs to the RuBisCO large chain family. Type I subfamily. In terms of assembly, heterohexadecamer of 8 large chains and 8 small chains; disulfide-linked. The disulfide link is formed within the large subunit homodimers. Requires Mg(2+) as cofactor. In terms of processing, the disulfide bond which can form in the large chain dimeric partners within the hexadecamer appears to be associated with oxidative stress and protein turnover.

It localises to the plastid. Its subcellular location is the chloroplast. The catalysed reaction is 2 (2R)-3-phosphoglycerate + 2 H(+) = D-ribulose 1,5-bisphosphate + CO2 + H2O. It carries out the reaction D-ribulose 1,5-bisphosphate + O2 = 2-phosphoglycolate + (2R)-3-phosphoglycerate + 2 H(+). Functionally, ruBisCO catalyzes two reactions: the carboxylation of D-ribulose 1,5-bisphosphate, the primary event in carbon dioxide fixation, as well as the oxidative fragmentation of the pentose substrate in the photorespiration process. Both reactions occur simultaneously and in competition at the same active site. The protein is Ribulose bisphosphate carboxylase large chain of Betula papyrifera (Paper birch).